Reading from the N-terminus, the 898-residue chain is DNA gyrase subunit A (898 aa).

2 disordered regions span residues 1 to 22 (MSDDKKDEEKLKKSDENFDDDS) and 36 to 56 (EEEKAKEEDEDEEEIPQEKEG). The 466-residue stretch at 97-562 (LPDARDGLKP…VMSSINNEDL (466 aa)) folds into the Topo IIA-type catalytic domain. Residue Tyr-185 is the O-(5'-phospho-DNA)-tyrosine intermediate of the active site. The GyrA-box signature appears at 589–595 (QRRGGVG).

It belongs to the type II topoisomerase GyrA/ParC subunit family. As to quaternary structure, heterotetramer, composed of two GyrA and two GyrB chains. In the heterotetramer, GyrA contains the active site tyrosine that forms a transient covalent intermediate with DNA, while GyrB binds cofactors and catalyzes ATP hydrolysis.

Its subcellular location is the cytoplasm. The enzyme catalyses ATP-dependent breakage, passage and rejoining of double-stranded DNA.. Its function is as follows. A type II topoisomerase that negatively supercoils closed circular double-stranded (ds) DNA in an ATP-dependent manner to modulate DNA topology and maintain chromosomes in an underwound state. Negative supercoiling favors strand separation, and DNA replication, transcription, recombination and repair, all of which involve strand separation. Also able to catalyze the interconversion of other topological isomers of dsDNA rings, including catenanes and knotted rings. Type II topoisomerases break and join 2 DNA strands simultaneously in an ATP-dependent manner. The sequence is that of DNA gyrase subunit A from Metamycoplasma arthritidis (strain 158L3-1) (Mycoplasma arthritidis).